The sequence spans 469 residues: Uridine kinase-like protein 4 (469 aa).

The tract at residues 46-249 is uridine kinase; sequence QRQPFVIGVA…IVQHICTKLG (204 aa). Positions 259-469 are uracil phosphoribosyltransferase; it reads NLYVIHSTFQ…GDRYFGTDDD (211 aa). GTP-binding positions include Lys-283, Arg-292, and 326–329; that span reads CKRL. 5-phospho-alpha-D-ribose 1-diphosphate is bound by residues Arg-336 and Arg-361. A GTP-binding site is contributed by Arg-381. Residues Asp-387, 392 to 395, and Glu-458 each bind 5-phospho-alpha-D-ribose 1-diphosphate; that span reads TGNS. Uracil is bound at residue 457–459; it reads GEF.

In the N-terminal section; belongs to the uridine kinase family. This sequence in the C-terminal section; belongs to the UPRTase family. Mg(2+) is required as a cofactor.

It catalyses the reaction UMP + diphosphate = 5-phospho-alpha-D-ribose 1-diphosphate + uracil. The enzyme catalyses cytidine + ATP = CMP + ADP + H(+). The catalysed reaction is uridine + ATP = UMP + ADP + H(+). It functions in the pathway pyrimidine metabolism; UMP biosynthesis via salvage pathway; UMP from uracil: step 1/1. Its pathway is pyrimidine metabolism; CTP biosynthesis via salvage pathway; CTP from cytidine: step 1/3. The protein operates within pyrimidine metabolism; UMP biosynthesis via salvage pathway; UMP from uridine: step 1/1. With respect to regulation, allosterically activated by GTP. In terms of biological role, involved in the pyrimidine salvage pathway. The uracil phosphoribosyltransferase (UPRT) activity, that catalyzes the conversion of uracil and 5-phospho-alpha-D-ribose 1-diphosphate (PRPP) to UMP and diphosphate, is unsure. The chain is Uridine kinase-like protein 4 (UKL4) from Arabidopsis thaliana (Mouse-ear cress).